The primary structure comprises 385 residues: Cell division protein FtsZ (385 aa).

GTP contacts are provided by residues 20 to 24 (GGGGN), 107 to 109 (GTG), glutamate 138, arginine 142, and asparagine 186.

This sequence belongs to the FtsZ family. In terms of assembly, homodimer. Polymerizes to form a dynamic ring structure in a strictly GTP-dependent manner. Interacts directly with several other division proteins.

It localises to the cytoplasm. In terms of biological role, essential cell division protein that forms a contractile ring structure (Z ring) at the future cell division site. The regulation of the ring assembly controls the timing and the location of cell division. One of the functions of the FtsZ ring is to recruit other cell division proteins to the septum to produce a new cell wall between the dividing cells. Binds GTP and shows GTPase activity. This is Cell division protein FtsZ from Buchnera aphidicola subsp. Baizongia pistaciae (strain Bp).